The following is a 258-amino-acid chain: Steroid 5-alpha-reductase DET2 (258 aa).

A run of 6 helical transmembrane segments spans residues 8–28 (FHYCLLTLYIIALPTWISLYF), 49–69 (LAWFLMESPTLWLTFFLFPSG), 77–97 (SFLLISPFLFHYFNRTVLYPL), 109–129 (FPVSVAFMAFGFNLLNGYLQA), 144–164 (LFWWRFLAGLLIFVVGMWVNV), and 201–221 (IMEWFGWAVMTWSWVGFGFFL).

This sequence belongs to the steroid 5-alpha reductase family. Accumulates in fibers (seed trichomes) during both their initiation and elongation phases. Also present in roots, hypocotyls, leaves, flowers and ovules, and barely in cotyledons.

It localises to the membrane. The enzyme catalyses a 3-oxo-5alpha-steroid + NADP(+) = a 3-oxo-Delta(4)-steroid + NADPH + H(+). Its pathway is plant hormone biosynthesis; brassinosteroid biosynthesis. Functionally, involved in a reduction step in the biosynthesis of the plant steroid, brassinolide (BL). Promotes cotton fibers (seed trichomes) initiation and elongation. The chain is Steroid 5-alpha-reductase DET2 from Gossypium hirsutum (Upland cotton).